A 297-amino-acid polypeptide reads, in one-letter code: Probable deoxyhypusine synthase (297 aa).

Catalysis depends on Lys265, which acts as the Nucleophile.

The protein belongs to the deoxyhypusine synthase family. It depends on NAD(+) as a cofactor.

The catalysed reaction is [eIF5A protein]-L-lysine + spermidine = [eIF5A protein]-deoxyhypusine + propane-1,3-diamine. The protein operates within protein modification; eIF5A hypusination. Functionally, catalyzes the NAD-dependent oxidative cleavage of spermidine and the subsequent transfer of the butylamine moiety of spermidine to the epsilon-amino group of a specific lysine residue of the eIF-5A precursor protein to form the intermediate deoxyhypusine residue. This is Probable deoxyhypusine synthase from Methanopyrus kandleri (strain AV19 / DSM 6324 / JCM 9639 / NBRC 100938).